A 156-amino-acid polypeptide reads, in one-letter code: MSETDLLLKMVRQPVKLYSVATLFHEFSEVITKLEHSVQKEPTSLLSEENWHKQFLKFAQALPAHGSASWLNLDDALQAVVGNSRSAFLHQLIAKLKSRHLQVLELNKIGSEPLDLSNLPAPFYVLLPESFAARITLLVQDKALPYVRVSFEYWHA.

This is an uncharacterized protein from Haemophilus influenzae (strain ATCC 51907 / DSM 11121 / KW20 / Rd).